The chain runs to 273 residues: Tryptophan synthase alpha chain (273 aa).

Active-site proton acceptor residues include glutamate 56 and aspartate 67.

It belongs to the TrpA family. In terms of assembly, tetramer of two alpha and two beta chains.

It catalyses the reaction (1S,2R)-1-C-(indol-3-yl)glycerol 3-phosphate + L-serine = D-glyceraldehyde 3-phosphate + L-tryptophan + H2O. It functions in the pathway amino-acid biosynthesis; L-tryptophan biosynthesis; L-tryptophan from chorismate: step 5/5. The alpha subunit is responsible for the aldol cleavage of indoleglycerol phosphate to indole and glyceraldehyde 3-phosphate. The sequence is that of Tryptophan synthase alpha chain from Shewanella baltica (strain OS185).